Reading from the N-terminus, the 64-residue chain is Large ribosomal subunit protein bL35 (64 aa).

The tract at residues 1 to 27 (MPKMKTKSGAKKRFKPTASGFKHKHAF) is disordered.

This sequence belongs to the bacterial ribosomal protein bL35 family.

The protein is Large ribosomal subunit protein bL35 of Azotobacter vinelandii (strain DJ / ATCC BAA-1303).